The following is a 280-amino-acid chain: RAD52 motif-containing protein 1 (280 aa).

The 84-residue stretch at Lys-18 to Lys-101 folds into the RRM domain.

Homodimer.

Its subcellular location is the nucleus. It localises to the cytoplasm. The protein resides in the nucleolus. May confer resistance to the antitumor agent cisplatin. Binds to DNA and RNA. In Danio rerio (Zebrafish), this protein is RAD52 motif-containing protein 1 (rdm1).